The sequence spans 366 residues: Aminomethyltransferase (366 aa).

It belongs to the GcvT family. As to quaternary structure, the glycine cleavage system is composed of four proteins: P, T, L and H.

The catalysed reaction is N(6)-[(R)-S(8)-aminomethyldihydrolipoyl]-L-lysyl-[protein] + (6S)-5,6,7,8-tetrahydrofolate = N(6)-[(R)-dihydrolipoyl]-L-lysyl-[protein] + (6R)-5,10-methylene-5,6,7,8-tetrahydrofolate + NH4(+). Its function is as follows. The glycine cleavage system catalyzes the degradation of glycine. The polypeptide is Aminomethyltransferase (Bacillus anthracis (strain A0248)).